Consider the following 391-residue polypeptide: Casein kinase II subunit alpha (391 aa).

The interval 36-41 (QDDYQL) is interaction with beta subunit. One can recognise a Protein kinase domain in the interval 39-324 (YQLVRKLGRG…AREAMEHPYF (286 aa)). ATP contacts are provided by residues 45–53 (LGRGKYSEV) and K68. The active-site Proton acceptor is the D156. 2 positions are modified to phosphothreonine; by CDK1: T344 and T360. Phosphoserine; by CDK1 occurs at positions 362 and 370.

It belongs to the protein kinase superfamily. Ser/Thr protein kinase family. CK2 subfamily. In terms of assembly, heterotetramer composed of two catalytic subunits (alpha chain and/or alpha' chain) and two regulatory subunits (beta chains). The tetramer can exist as a combination of 2 alpha/2 beta, 2 alpha'/2 beta or 1 alpha/1 alpha'/2 beta subunits. Also part of a CK2-SPT16-SSRP1 complex composed of SSRP1, SUPT16H, CSNK2A1, CSNK2A2 and CSNK2B, which forms following UV irradiation. Interacts with RNPS1. Interacts with SNAI1. Interacts with PML. Interacts with CCAR2. Interacts with HIRIP3. Phosphorylated at Thr-344, Thr-360, Ser-362 and Ser-370 by CDK1 in prophase and metaphase and dephosphorylated during anaphase. Phosphorylation does not directly affect casein kinase 2 activity, but may contribute to its regulation by forming binding sites for interacting proteins and/or targeting it to different compartments.

Its subcellular location is the nucleus. It catalyses the reaction L-seryl-[protein] + ATP = O-phospho-L-seryl-[protein] + ADP + H(+). The enzyme catalyses L-threonyl-[protein] + ATP = O-phospho-L-threonyl-[protein] + ADP + H(+). With respect to regulation, constitutively active protein kinase whose activity is not directly affected by phosphorylation. Seems to be regulated by level of expression and localization. Catalytic subunit of a constitutively active serine/threonine-protein kinase complex that phosphorylates a large number of substrates containing acidic residues C-terminal to the phosphorylated serine or threonine. Regulates numerous cellular processes, such as cell cycle progression, apoptosis and transcription, as well as viral infection. May act as a regulatory node which integrates and coordinates numerous signals leading to an appropriate cellular response. During mitosis, functions as a component of the p53/TP53-dependent spindle assembly checkpoint (SAC) that maintains cyclin-B-CDK1 activity and G2 arrest in response to spindle damage. Also required for p53/TP53-mediated apoptosis, phosphorylating 'Ser-392' of p53/TP53 following UV irradiation. Phosphorylates a number of DNA repair proteins in response to DNA damage, such as MDC1, MRE11, RAD9A, RAD51 and HTATSF1, promoting their recruitment to DNA damage sites. Can also negatively regulate apoptosis. Phosphorylates the caspases CASP9 and CASP2 and the apoptotic regulator NOL3. Phosphorylation protects CASP9 from cleavage and activation by CASP8, and inhibits the dimerization of CASP2 and activation of CASP8. Phosphorylates YY1, protecting YY1 from cleavage by CASP7 during apoptosis. Regulates transcription by direct phosphorylation of RNA polymerases I, II, III and IV. Also phosphorylates and regulates numerous transcription factors including NF-kappa-B, STAT1, CREB1, IRF1, IRF2, ATF1, ATF4, SRF, MAX, JUN, FOS, MYC and MYB. Phosphorylates Hsp90 and its co-chaperones FKBP4 and CDC37, which is essential for chaperone function. Mediates sequential phosphorylation of FNIP1, promoting its gradual interaction with Hsp90, leading to activate both kinase and non-kinase client proteins of Hsp90. Regulates Wnt signaling by phosphorylating CTNNB1 and the transcription factor LEF1. Acts as an ectokinase that phosphorylates several extracellular proteins. Phosphorylates PML at 'Ser-565' and primes it for ubiquitin-mediated degradation. Plays an important role in the circadian clock function by phosphorylating BMAL1 at 'Ser-90' which is pivotal for its interaction with CLOCK and which controls CLOCK nuclear entry. Phosphorylates FMR1, promoting FMR1-dependent formation of a membraneless compartment. May phosphorylate histone H2A on 'Ser-1'. The sequence is that of Casein kinase II subunit alpha (CSNK2A1) from Oryctolagus cuniculus (Rabbit).